Here is a 483-residue protein sequence, read N- to C-terminus: Glycogen synthase kinase-3 alpha (483 aa).

Over residues 1 to 15 the composition is skewed to gly residues; the sequence is MSGGGPSGGGPGGSG. The disordered stretch occupies residues 1–96; the sequence is MSGGGPSGGG…PPPGVKLGRD (96 aa). The residue at position 2 (serine 2) is an N-acetylserine. Serine 2 carries the phosphoserine modification. A Phosphoserine; by PKB/AKT1 modification is found at serine 21. Residues 25 to 82 show a composition bias toward gly residues; that stretch reads PGGGGGGGGGGPGGSASGPGGTGGGKASVGAMGGGVGASSSGGGPGGSGGGGSGGPGA. Serine 72, serine 77, and serine 97 each carry phosphoserine. The Protein kinase domain occupies 119 to 403; sequence YTDIKVIGNG…PLEACAHSFF (285 aa). ATP is bound by residues 125 to 133 and lysine 148; that span reads IGNGSFGVV. Aspartate 244 acts as the Proton acceptor in catalysis. Tyrosine 279 carries the post-translational modification Phosphotyrosine. The tract at residues 449-483 is disordered; it reads AGTTTLTPSSQALTETPTSSDWQSTDATPTLTNSS.

Belongs to the protein kinase superfamily. CMGC Ser/Thr protein kinase family. GSK-3 subfamily. As to quaternary structure, monomer. Interacts with ARRB2. Interacts with AXIN1 and CTNNB1/beta-catenin. Interacts with CTNND2. Interacts with LMBR1L. Interacts with DDX3X. Interacts with TNFRSF10B. Interacts with RICTOR; the interaction results in phosphorylation of RICTOR at 'Thr-1695' by GSK3A which facilitates FBXW7-mediated ubiquitination and subsequent degradation of RICTOR. In terms of assembly, (Microbial infection) Interacts with M.tuberculosis PtpA. Post-translationally, phosphorylated by AKT1 at Ser-21: upon insulin-mediated signaling, the activated PKB/AKT1 protein kinase phosphorylates and deactivates GSK3A, resulting in the dephosphorylation and activation of GYS1. Activated by phosphorylation at Tyr-279. (Microbial infection) Dephosphorylated at Tyr-279 by M.tuberculosis PtpA, which leads to prevention of apoptosis during early stages of microbial infection.

The enzyme catalyses L-seryl-[tau protein] + ATP = O-phospho-L-seryl-[tau protein] + ADP + H(+). It catalyses the reaction L-threonyl-[tau protein] + ATP = O-phospho-L-threonyl-[tau protein] + ADP + H(+). It carries out the reaction L-seryl-[protein] + ATP = O-phospho-L-seryl-[protein] + ADP + H(+). The catalysed reaction is L-threonyl-[protein] + ATP = O-phospho-L-threonyl-[protein] + ADP + H(+). Its activity is regulated as follows. Activated by phosphorylation at Tyr-279. In response to insulin, inhibited by phosphorylation at Ser-21 by PKB/AKT1; phosphorylation at this site causes a conformational change, preventing access of substrates to the active site. Inhibited by lithium. Functionally, constitutively active protein kinase that acts as a negative regulator in the hormonal control of glucose homeostasis, Wnt signaling and regulation of transcription factors and microtubules, by phosphorylating and inactivating glycogen synthase (GYS1 or GYS2), CTNNB1/beta-catenin, APC and AXIN1. Requires primed phosphorylation of the majority of its substrates. Contributes to insulin regulation of glycogen synthesis by phosphorylating and inhibiting GYS1 activity and hence glycogen synthesis. Regulates glycogen metabolism in liver, but not in muscle. May also mediate the development of insulin resistance by regulating activation of transcription factors. In Wnt signaling, regulates the level and transcriptional activity of nuclear CTNNB1/beta-catenin. Facilitates amyloid precursor protein (APP) processing and the generation of APP-derived amyloid plaques found in Alzheimer disease. May be involved in the regulation of replication in pancreatic beta-cells. Is necessary for the establishment of neuronal polarity and axon outgrowth. Through phosphorylation of the anti-apoptotic protein MCL1, may control cell apoptosis in response to growth factors deprivation. Acts as a regulator of autophagy by mediating phosphorylation of KAT5/TIP60 under starvation conditions which activates KAT5/TIP60 acetyltransferase activity and promotes acetylation of key autophagy regulators, such as ULK1 and RUBCNL/Pacer. Negatively regulates extrinsic apoptotic signaling pathway via death domain receptors. Promotes the formation of an anti-apoptotic complex, made of DDX3X, BRIC2 and GSK3B, at death receptors, including TNFRSF10B. The anti-apoptotic function is most effective with weak apoptotic signals and can be overcome by stronger stimulation. Phosphorylates mTORC2 complex component RICTOR at 'Thr-1695' which facilitates FBXW7-mediated ubiquitination and subsequent degradation of RICTOR. In Homo sapiens (Human), this protein is Glycogen synthase kinase-3 alpha (GSK3A).